A 700-amino-acid polypeptide reads, in one-letter code: MARKTPIERYRNIGISAHIDAGKTTTTERILFYTGVNHKLGETHDGSATMDWMEQEQERGITITSAATTAFWRGMAGNYPEYRINIIDTPGHVDFTIEVERSMRVLDGACMVYCAVGGVQPQSETVWRQANKYGVPRLAFVNKMDRTGANFFKVYDQLKTRLRANPVPIVIPIGAEDSFTGVVDLVKMKAIIWDEASQGTKFEYGDIPAELEGTANEWREKLVEAAAESSEELMNKYLETGSLDEDDINVALRQRTIAGEIQPMLCGTAFKNKGVQRMLDAVIDYLPSPADIPPVDGQDDDGNPIKRSADDAEKFSALAFKLMSDPFVGQLTFVRVYSGVLKSGDTVYNPIKGKKERIGRLLQMHANNREEIKEVLAGDIAAVVGLKDVTTGETLCDIDSHILLERMEFPEPVISQAVEPKSKADQEKMGLALSRLAQEDPSFRVRSDEESGQTIISGMGELHLEILVDRMRREFGVEANVGKPQVAYRETIRKNCDEVEGKFVKQSGGRGQYGHVVLKLEPLPPGGGYEFVDAIKGGVVPREYIPAVDKGIQETLPAGILAGYPVVDVKATLFFGSYHDVDSNENAFKMAASMAFKEGMRRASPVLLEPMMAVEVETPEDYAGTVMGDLSSRRGMVQGMDDIVGGGKTIKAEVPLAEMFGYATNLRSLTQGRATYTMEFKHYAEAPKNVADEVIAARGK.

A tr-type G domain is found at 8 to 290 (ERYRNIGISA…AVIDYLPSPA (283 aa)). Residues 17 to 24 (AHIDAGKT), 88 to 92 (DTPGH), and 142 to 145 (NKMD) each bind GTP.

The protein belongs to the TRAFAC class translation factor GTPase superfamily. Classic translation factor GTPase family. EF-G/EF-2 subfamily.

Its subcellular location is the cytoplasm. Functionally, catalyzes the GTP-dependent ribosomal translocation step during translation elongation. During this step, the ribosome changes from the pre-translocational (PRE) to the post-translocational (POST) state as the newly formed A-site-bound peptidyl-tRNA and P-site-bound deacylated tRNA move to the P and E sites, respectively. Catalyzes the coordinated movement of the two tRNA molecules, the mRNA and conformational changes in the ribosome. The protein is Elongation factor G 1 of Bordetella parapertussis (strain 12822 / ATCC BAA-587 / NCTC 13253).